Consider the following 125-residue polypeptide: PCNA-associated factor (125 aa).

Residues 1–125 (MVRTKADSAG…SEEAADSDDE (125 aa)) are disordered. The span at 8 to 17 (SAGSSASSGS) shows a compositional bias: low complexity. The D-box motif lies at 28–39 (RKTFGSSSSGSN). The short motif at 68–79 (QKGIGEFFGSPS) is the PIP-box element. A KEN box motif is present at residues 85–87 (KEN). Residues 95 to 107 (EAGGSGAGKAPRK) carry the Initiation motif motif. The segment covering 115-125 (PSEEAADSDDE) has biased composition (acidic residues).

Interacts with pcna.

It is found in the nucleus. Its subcellular location is the cytoplasm. It localises to the perinuclear region. PCNA-binding protein that acts as a regulator of DNA repair during DNA replication. Following DNA damage, the interaction with pcna is disrupted, facilitating the interaction between monoubiquitinated pcna and the translesion DNA synthesis DNA polymerase eta (polh) at stalled replisomes, facilitating the bypass of replication-fork-blocking lesions. Also acts as a regulator of centrosome number. This Xenopus tropicalis (Western clawed frog) protein is PCNA-associated factor.